The primary structure comprises 186 residues: uncharacterized protein (186 aa).

An N-terminal signal peptide occupies residues 1-18 (MKKFFFAAALVVSGLLVG). The N-palmitoyl cysteine moiety is linked to residue Cys-19. Cys-19 is lipidated: S-diacylglycerol cysteine.

The protein localises to the cell membrane. This is an uncharacterized protein from Salmonella typhimurium (strain LT2 / SGSC1412 / ATCC 700720).